The chain runs to 267 residues: Small ribosomal subunit protein uS2 (267 aa).

Residues 222–267 form a disordered region; it reads GKALRDQDSEEEIQNKEQDEVSQEEKDDILDEAMNEEDFEIPEDKE. The span at 223-240 shows a compositional bias: basic and acidic residues; the sequence is KALRDQDSEEEIQNKEQD. The span at 241–267 shows a compositional bias: acidic residues; the sequence is EVSQEEKDDILDEAMNEEDFEIPEDKE.

This sequence belongs to the universal ribosomal protein uS2 family.

This is Small ribosomal subunit protein uS2 from Campylobacter hominis (strain ATCC BAA-381 / DSM 21671 / CCUG 45161 / LMG 19568 / NCTC 13146 / CH001A).